A 382-amino-acid polypeptide reads, in one-letter code: Lipid-A-disaccharide synthase (382 aa).

This sequence belongs to the LpxB family.

It carries out the reaction 2-N,3-O-bis[(3R)-3-hydroxytetradecanoyl]-alpha-D-glucosaminyl 1-phosphate + UDP-2-N,3-O-bis[(3R)-3-hydroxytetradecanoyl]-alpha-D-glucosamine = lipid A disaccharide (E. coli) + UDP + H(+). The catalysed reaction is a lipid X + a UDP-2-N,3-O-bis[(3R)-3-hydroxyacyl]-alpha-D-glucosamine = a lipid A disaccharide + UDP + H(+). Its pathway is glycolipid biosynthesis; lipid IV(A) biosynthesis; lipid IV(A) from (3R)-3-hydroxytetradecanoyl-[acyl-carrier-protein] and UDP-N-acetyl-alpha-D-glucosamine: step 5/6. Its function is as follows. Condensation of UDP-2,3-diacylglucosamine and 2,3-diacylglucosamine-1-phosphate to form lipid A disaccharide, a precursor of lipid A, a phosphorylated glycolipid that anchors the lipopolysaccharide to the outer membrane of the cell. The protein is Lipid-A-disaccharide synthase of Salmonella agona (strain SL483).